Reading from the N-terminus, the 488-residue chain is Glutamyl-tRNA(Gln) amidotransferase subunit A (488 aa).

Catalysis depends on charge relay system residues Lys-77 and Ser-152. Ser-176 (acyl-ester intermediate) is an active-site residue.

Belongs to the amidase family. GatA subfamily. Heterotrimer of A, B and C subunits.

It catalyses the reaction L-glutamyl-tRNA(Gln) + L-glutamine + ATP + H2O = L-glutaminyl-tRNA(Gln) + L-glutamate + ADP + phosphate + H(+). Allows the formation of correctly charged Gln-tRNA(Gln) through the transamidation of misacylated Glu-tRNA(Gln) in organisms which lack glutaminyl-tRNA synthetase. The reaction takes place in the presence of glutamine and ATP through an activated gamma-phospho-Glu-tRNA(Gln). In Streptococcus gordonii (strain Challis / ATCC 35105 / BCRC 15272 / CH1 / DL1 / V288), this protein is Glutamyl-tRNA(Gln) amidotransferase subunit A.